The chain runs to 96 residues: NADH-quinone oxidoreductase subunit K (96 aa).

3 helical membrane-spanning segments follow: residues 1–21 (MNYI…VLVR), 25–45 (IIVF…FVAF), and 56–76 (VIAF…LAII).

It belongs to the complex I subunit 4L family. In terms of assembly, NDH-1 is composed of 14 different subunits. Subunits NuoA, H, J, K, L, M, N constitute the membrane sector of the complex.

It is found in the cell membrane. It catalyses the reaction a quinone + NADH + 5 H(+)(in) = a quinol + NAD(+) + 4 H(+)(out). In terms of biological role, NDH-1 shuttles electrons from NADH, via FMN and iron-sulfur (Fe-S) centers, to quinones in the respiratory chain. The immediate electron acceptor for the enzyme in this species is believed to be a menaquinone. Couples the redox reaction to proton translocation (for every two electrons transferred, four hydrogen ions are translocated across the cytoplasmic membrane), and thus conserves the redox energy in a proton gradient. The sequence is that of NADH-quinone oxidoreductase subunit K from Thermobifida fusca (strain YX).